A 275-amino-acid polypeptide reads, in one-letter code: Autophagy-related protein 5 (275 aa).

Lysine 129 participates in a covalent cross-link: Glycyl lysine isopeptide (Lys-Gly) (interchain with G-Cter in lgg-3/ATG12). Residues leucine 221–serine 231 are compositionally biased toward low complexity. The segment at leucine 221–serine 241 is disordered.

It belongs to the ATG5 family. As to quaternary structure, most likely a component of a complex at least containing atg-5, lgg-3/ATG12, atg-16.1 and/or atg-16.2. Interacts with lgg-3/ATG12. Interacts with atg-16.1 (via N-terminus) and atg-16.2 (via N-terminus). In terms of processing, conjugated to lgg-3/ATG12; which is essential for autophagy.

Its subcellular location is the preautophagosomal structure membrane. Involved in autophagic vesicle formation. Conjugation with lgg-3/ATG12, through a ubiquitin-like conjugating system involving atg-7 as an E1-like activating enzyme and atg-10 as an E2-like conjugating enzyme, is essential for its function. Most likely a component of an atg-5-lgg-3-atg-16 complex that promotes autophagosome formation by associating with lgg-2, but not lgg-1, at the preautophagosomal membrane. Probably, as part of an atg-5-lgg-3-atg-16 complex, required for lgg-1 lipidation; the complex acts as an E3-like enzyme promoting atg-3-mediated lgg-1 lipidation. Furthermore, association with atg-16.2 is required for the nucleation of lgg-1 positive autophagic vesicles. The sequence is that of Autophagy-related protein 5 from Caenorhabditis elegans.